Consider the following 494-residue polypeptide: Ankyrin repeat domain-containing protein 33B (494 aa).

Positions 1-80 (MVLLAGTGPE…SAESVPEGVP (80 aa)) are disordered. The segment covering 30–42 (VEEDPADYEEFED) has biased composition (acidic residues). 5 ANK repeats span residues 84–113 (PETATLLRAACANNVGLLRTLVRRGVSVEE), 120–150 (NGRTGLIVACYHGFVDTVVALAECPHVDVNW), 154–183 (EGNTALITAAQAGHAIITNYLLNYFPGLDL), 189–218 (FGFTALMKAAMQGRTDCIRALMLAGADVHA), and 223–255 (RGMSPQEWATYTGRVDAVRLMQRLLERPCPEQF). The disordered stretch occupies residues 349–494 (RAARGPQAQE…RRTAPWKKRT (146 aa)). Basic and acidic residues predominate over residues 371 to 382 (TGQEDADSREGS). Serine 405 is modified (phosphoserine). 2 stretches are compositionally biased toward basic and acidic residues: residues 440 to 451 (RPARKGSTKDSG) and 459 to 487 (RYKEAKEEKRKAEEAEKKRQAEAQKERRT). Residues 459-488 (RYKEAKEEKRKAEEAEKKRQAEAQKERRTA) are a coiled coil.

This Homo sapiens (Human) protein is Ankyrin repeat domain-containing protein 33B (ANKRD33B).